A 156-amino-acid polypeptide reads, in one-letter code: Small ribosomal subunit protein uS7 (156 aa).

Belongs to the universal ribosomal protein uS7 family. In terms of assembly, part of the 30S ribosomal subunit. Contacts proteins S9 and S11.

In terms of biological role, one of the primary rRNA binding proteins, it binds directly to 16S rRNA where it nucleates assembly of the head domain of the 30S subunit. Is located at the subunit interface close to the decoding center, probably blocks exit of the E-site tRNA. The polypeptide is Small ribosomal subunit protein uS7 (Pseudomonas entomophila (strain L48)).